The following is a 514-amino-acid chain: F-box-like/WD repeat-containing protein TBL1XR1 (514 aa).

Serine 2 carries the post-translational modification N-acetylserine. Positions 4-36 constitute a LisH domain; the sequence is SSDEVNFLVYRYLQESGFSHSAFTFGIESHISQ. Residues 41 to 86 form the F-box-like domain; sequence GALVPPAALISIIQKGLQYVEAEVSINEDGTLFDGRPIESLSLIDA. Lysine 102 carries the N6-acetyllysine modification. Serine 119 bears the Phosphoserine mark. Over residues 120 to 135 the composition is skewed to low complexity; the sequence is QQGSAKNGENTANGEE. Residues 120–139 are disordered; it reads QQGSAKNGENTANGEENGAH. WD repeat units follow at residues 167–206, 223–262, 264–303, 306–344, 347–386, 389–437, 440–479, and 481–513; these read GHES…TSGS, PSNK…ASTL, QHKG…AKQQ, FHSA…PIKT, GHTN…CVHD, AHNK…CIHT, KHQE…LVHS, and RGTG…LDLR. Lysine 277 participates in a covalent cross-link: Glycyl lysine isopeptide (Lys-Gly) (interchain with G-Cter in SUMO2).

It belongs to the WD repeat EBI family. Component of the N-Cor repressor complex, at least composed of NCOR1, NCOR2, HDAC3, TBL1X, TBL1XR1, CORO2A and GPS2. Probable component of some E3 ubiquitin ligase complex. Interacts with histones H2B and H4. Interacts with MECP2; bridges interaction between MECP2 and NCOR1. Interacts with USP44. As to expression, widely expressed including the pituitary, hypothalamus, white and brown adipose tissue, muscle and liver.

Its subcellular location is the nucleus. F-box-like protein involved in the recruitment of the ubiquitin/19S proteasome complex to nuclear receptor-regulated transcription units. Plays an essential role in transcription activation mediated by nuclear receptors. Probably acts as integral component of the N-Cor corepressor complex that mediates the recruitment of the 19S proteasome complex, leading to the subsequent proteasomal degradation of N-Cor complex, thereby allowing cofactor exchange, and transcription activation. This Homo sapiens (Human) protein is F-box-like/WD repeat-containing protein TBL1XR1 (TBL1XR1).